A 541-amino-acid polypeptide reads, in one-letter code: Chaperonin GroEL 2 (541 aa).

ATP-binding positions include threonine 29–proline 32, aspartate 86–threonine 90, glycine 413, asparagine 476–alanine 478, and aspartate 492.

Belongs to the chaperonin (HSP60) family. Forms a cylinder of 14 subunits composed of two heptameric rings stacked back-to-back. Interacts with the co-chaperonin GroES.

Its subcellular location is the secreted. The protein localises to the capsule. It localises to the cell surface. It is found in the cell wall. The catalysed reaction is ATP + H2O + a folded polypeptide = ADP + phosphate + an unfolded polypeptide.. Together with its co-chaperonin GroES, plays an essential role in assisting protein folding. The GroEL-GroES system forms a nano-cage that allows encapsulation of the non-native substrate proteins and provides a physical environment optimized to promote and accelerate protein folding. The chain is Chaperonin GroEL 2 from Mycolicibacterium paratuberculosis (strain ATCC BAA-968 / K-10) (Mycobacterium paratuberculosis).